The chain runs to 157 residues: Protein p17 (157 aa).

Disordered stretches follow at residues 46 to 70 and 83 to 157; these read VTFGSAPTPSPSMVEETNGVGPEGK and TSRK…STQR. The segment covering 88–100 has biased composition (low complexity); the sequence is LTPTPSLSPLTSL. Residues 114–132 are compositionally biased toward polar residues; it reads TSTPIPSAGTSSTLTQRVL. The span at 134–157 shows a compositional bias: low complexity; it reads SLRAPSASTRRSLTASSSSPSTQR.

This Helicoverpa armigera (Cotton bollworm) protein is Protein p17 (p17).